The chain runs to 1529 residues: DNA-directed RNA polymerase subunit beta' (1529 aa).

Residues Cys156, Cys158, Cys183, and Cys186 each coordinate Zn(2+). Residues Asp1328, Asp1330, and Asp1332 each contribute to the Mg(2+) site.

This sequence belongs to the RNA polymerase beta' chain family. RpoC1 subfamily. In plastids the minimal PEP RNA polymerase catalytic core is composed of four subunits: alpha, beta, beta', and beta''. When a (nuclear-encoded) sigma factor is associated with the core the holoenzyme is formed, which can initiate transcription. The cofactor is Mg(2+). Zn(2+) is required as a cofactor.

The protein resides in the plastid. The protein localises to the chloroplast. It catalyses the reaction RNA(n) + a ribonucleoside 5'-triphosphate = RNA(n+1) + diphosphate. In terms of biological role, DNA-dependent RNA polymerase catalyzes the transcription of DNA into RNA using the four ribonucleoside triphosphates as substrates. This Tetradesmus obliquus (Green alga) protein is DNA-directed RNA polymerase subunit beta'.